The sequence spans 255 residues: 5'-nucleotidase SurE (255 aa).

A divalent metal cation contacts are provided by D8, D9, S40, and N93.

It belongs to the SurE nucleotidase family. The cofactor is a divalent metal cation.

It localises to the cytoplasm. It carries out the reaction a ribonucleoside 5'-phosphate + H2O = a ribonucleoside + phosphate. Nucleotidase that shows phosphatase activity on nucleoside 5'-monophosphates. This chain is 5'-nucleotidase SurE, found in Rhodopseudomonas palustris (strain BisA53).